A 142-amino-acid chain; its full sequence is 2-aminomuconate deaminase (142 aa).

It belongs to the 2-aminomuconate deaminase family. In terms of assembly, homotetramer.

The catalysed reaction is (2Z,4E)-2-aminomuconate + H2O = (3E)-2-oxohex-3-enedioate + NH4(+). With respect to regulation, slightly inhibited by Pb(2+), Hg(+) and Cu(2+). Functionally, involved in the modified meta-cleavage pathway for the 2-aminophenol catabolism. Only active toward 2-aminomuconic acid. The sequence is that of 2-aminomuconate deaminase (amnD) from Pseudomonas sp.